Reading from the N-terminus, the 201-residue chain is Endoribonuclease YbeY (201 aa).

Residues His120, His124, and His130 each contribute to the Zn(2+) site. The disordered stretch occupies residues 151–201 (DGADGADGADGARGAADGAADGGEGRRGDQGRRGDQGRGGGAGEPPAAPAR). Residues 173–186 (GEGRRGDQGRRGDQ) are compositionally biased toward basic and acidic residues.

It belongs to the endoribonuclease YbeY family. Requires Zn(2+) as cofactor.

It localises to the cytoplasm. Functionally, single strand-specific metallo-endoribonuclease involved in late-stage 70S ribosome quality control and in maturation of the 3' terminus of the 16S rRNA. This Frankia casuarinae (strain DSM 45818 / CECT 9043 / HFP020203 / CcI3) protein is Endoribonuclease YbeY.